Here is a 689-residue protein sequence, read N- to C-terminus: Protein-glutamine gamma-glutamyltransferase 2 (689 aa).

Catalysis depends on residues Cys278, His336, and Asp359. Residues Asn399, Asp401, Glu437, Glu447, and Glu452 each contribute to the Ca(2+) site. A disordered region spans residues 427 to 453; it reads STKSVGRDSREDITHTYKYPEGSEKER. The segment covering 431–441 has biased composition (basic and acidic residues); it reads VGRDSREDITH. 476-483 provides a ligand contact to GTP; that stretch reads RIKLSEGA. A Ca(2+)-binding site is contributed by Glu539. 580 to 583 serves as a coordination point for GTP; it reads RDVY.

It belongs to the transglutaminase superfamily. Transglutaminase family. Monomer. The cofactor is Ca(2+). Predominates in mature erythrocytes. Also found in kidney and cardiac muscle.

The protein localises to the cytoplasm. It is found in the cytosol. It localises to the nucleus. The protein resides in the chromosome. Its subcellular location is the secreted. The protein localises to the extracellular space. It is found in the extracellular matrix. It localises to the cell membrane. The protein resides in the mitochondrion. The enzyme catalyses L-glutaminyl-[protein] + L-lysyl-[protein] = [protein]-L-lysyl-N(6)-5-L-glutamyl-[protein] + NH4(+). The catalysed reaction is L-glutaminyl-[protein] + serotonin = 5-serotonyl-L-glutamyl-[protein] + NH4(+). It carries out the reaction L-glutaminyl-[protein] + dopamine = 5-dopaminyl-L-glutamyl-[protein] + NH4(+). It catalyses the reaction L-glutaminyl-[protein] + histamine = 5-histaminyl-L-glutamyl-[protein] + NH4(+). The enzyme catalyses L-glutaminyl-[protein] + (R)-noradrenaline = 5-(R)-noradrenalinyl-L-glutamyl-[protein] + NH4(+). The catalysed reaction is L-glutaminyl-[protein] + H2O = L-glutamyl-[protein] + NH4(+). Acyltransferase activity is regulated by the binding of GTP and Ca(2+): inactivated by GTP, which stabilizes its closed structure, thereby obstructing the accessibility of substrates to the active sites. In contrast, Ca(2+) acts as a cofactor by inducing conformational change to the active open form. In absence of Ca(2+), Mg(2+) may bind Ca(2+)-binding sites, promoting GTP-binding and subsequent inhibition of the acyltransferase activity. Its function is as follows. Calcium-dependent acyltransferase that catalyzes the formation of covalent bonds between peptide-bound glutamine and various primary amines, such as gamma-amino group of peptide-bound lysine, or mono- and polyamines, thereby producing cross-linked or aminated proteins, respectively. Involved in many biological processes, such as bone development, angiogenesis, wound healing, cellular differentiation, chromatin modification and apoptosis. Acts as a protein-glutamine gamma-glutamyltransferase by mediating the cross-linking of proteins: under physiological conditions, the protein cross-linking activity is inhibited by GTP; inhibition is relieved by Ca(2+) in response to various stresses. When secreted, catalyzes cross-linking of proteins of the extracellular matrix, resulting in the formation of scaffolds. Plays a key role during apoptosis, both by (1) promoting the cross-linking of cytoskeletal proteins resulting in condensation of the cytoplasm, and by (2) mediating cross-linking proteins of the extracellular matrix, resulting in the irreversible formation of scaffolds that stabilize the integrity of the dying cells before their clearance by phagocytosis, thereby preventing the leakage of harmful intracellular components. In addition to protein cross-linking, can use different monoamine substrates to catalyze a vast array of protein post-translational modifications: mediates aminylation of serotonin, dopamine, noradrenaline or histamine into glutamine residues of target proteins to generate protein serotonylation, dopaminylation, noradrenalinylation or histaminylation, respectively. Mediates protein serotonylation of small GTPases during activation and aggregation of platelets, leading to constitutive activation of these GTPases. Plays a key role in chromatin organization by mediating serotonylation and dopaminylation of histone H3. Catalyzes serotonylation of 'Gln-5' of histone H3 (H3Q5ser) during serotonergic neuron differentiation, thereby facilitating transcription. Acts as a mediator of neurotransmission-independent role of nuclear dopamine in ventral tegmental area (VTA) neurons: catalyzes dopaminylation of 'Gln-5' of histone H3 (H3Q5dop), thereby regulating relapse-related transcriptional plasticity in the reward system. Also acts as a protein deamidase by mediating the side chain deamidation of specific glutamine residues of proteins to glutamate. May also act as an isopeptidase cleaving the previously formed cross-links. Also able to participate in signaling pathways independently of its acyltransferase activity: acts as a signal transducer in alpha-1 adrenergic receptor-mediated stimulation of phospholipase C-delta (PLCD) activity and is required for coupling alpha-1 adrenergic agonists to the stimulation of phosphoinositide lipid metabolism. The protein is Protein-glutamine gamma-glutamyltransferase 2 of Gallus gallus (Chicken).